Here is a 673-residue protein sequence, read N- to C-terminus: Exoribonuclease 2 (673 aa).

The region spanning 191–516 is the RNB domain; that stretch reads RTDLTATPFF…NHRLLKAVIA (326 aa). An S1 motif domain is found at 562–645; that stretch reads DKVFNAEIID…ETRSLIAKPA (84 aa). Positions 650 to 673 are disordered; the sequence is PGPAPVAPTSEADATPADEAPKAE.

The protein belongs to the RNR ribonuclease family. RNase II subfamily.

The protein resides in the cytoplasm. The enzyme catalyses Exonucleolytic cleavage in the 3'- to 5'-direction to yield nucleoside 5'-phosphates.. Its function is as follows. Involved in mRNA degradation. Hydrolyzes single-stranded polyribonucleotides processively in the 3' to 5' direction. The protein is Exoribonuclease 2 of Aeromonas hydrophila subsp. hydrophila (strain ATCC 7966 / DSM 30187 / BCRC 13018 / CCUG 14551 / JCM 1027 / KCTC 2358 / NCIMB 9240 / NCTC 8049).